Consider the following 83-residue polypeptide: U-actitoxin-Avd8d (83 aa).

Positions 1 to 19 are cleaved as a signal peptide; the sequence is MASTRLFVLLVIGTVLLCQ. The propeptide occupies 20-38; sequence VSGFLDELLAEHELPQDMT.

This sequence belongs to the sea anemone 8 toxin family.

It localises to the secreted. The protein resides in the nematocyst. This is U-actitoxin-Avd8d from Anemonia viridis (Snakelocks anemone).